Reading from the N-terminus, the 416-residue chain is Phakinin (416 aa).

Residues 1-48 (MSKRRVAADLPSGTNSSMPVQRHRVSSLRGTHSPSSLDSPPASRTSAV) form a disordered region. Ser-2 bears the N-acetylserine mark. The tract at residues 2-115 (SKRRVAADLP…HTTVEDLGGC (114 aa)) is head. Residues Ser-27, Ser-33, Ser-36, and Ser-91 each carry the phosphoserine modification. Residues 28-48 (LRGTHSPSSLDSPPASRTSAV) are compositionally biased toward polar residues. Residues 105–416 (DHTTVEDLGG…HALLDREENN (312 aa)) enclose the IF rod domain. 3 coiled-coil regions span residues 116-146 (LVEYMTKVHALEQVSQELETQLRAHLESKAK), 170-249 (LENA…VKVL), and 308-402 (QTQE…LQKD). A tail region spans residues 397-416 (SQLQKDVASYHALLDREENN).

The protein belongs to the intermediate filament family. In terms of assembly, part of a complex required for lens intermediate filament formation composed of BFSP1, BFSP2 and CRYAA. Found in a complex composed of PPL (via C-terminal linker domain), BFSP1 and BFSP2 in the retinal lens. Within the complex interacts with PPL (via C-terminal linker domain) and with BFSP1. Identified in a complex that contains VIM, EZR, AHNAK, BFSP1, BFSP2, ANK2, PLEC, PRX and spectrin. Interacts with LGSN. Interacts with VIM. Detected in retina lens fiber cells (at protein level). Also expressed in the lens epithelium, abundantly expressed in the anterior and anterolateral epithelium, less frequently expressed nearer the lens coronal equator (at protein level).

The protein resides in the cell membrane. It is found in the cytoplasm. The protein localises to the cytoskeleton. It localises to the cell cortex. Its function is as follows. Required for the correct formation of lens intermediate filaments as part of a complex composed of BFSP1, BFSP2 and CRYAA. Plays a role in maintenance of retinal lens optical clarity. The chain is Phakinin (Bfsp2) from Mus musculus (Mouse).